A 330-amino-acid polypeptide reads, in one-letter code: MPRSFLVKSKKAHTYHQPRVQEDEPLWPPALTPVPRDQAPSNSPVLSTLFPNQCLDWTNLKREPELEQDQNLARMAPAPEGPIVLSRPQDGDSPLSDSPPFYKPSFSWDTLATTYGHSYRQAPSTMQSAFLEHSVSLYGSPLVPSTEPALDFSLRYSPGMDAYHCVKCNKVFSTPHGLEVHVRRSHSGTRPFACDICGKTFGHAVSLEQHTHVHSQERSFECRMCGKAFKRSSTLSTHLLIHSDTRPYPCQFCGKRFHQKSDMKKHTYIHTGEKPHKCQVCGKAFSQSSNLITHSRKHTGFKPFSCELCTKGFQRKVDLRRHRESQHNLK.

Residues 1–20 (MPRSFLVKSKKAHTYHQPRV) are SNAG domain. Residues 1–42 (MPRSFLVKSKKAHTYHQPRVQEDEPLWPPALTPVPRDQAPSN) are disordered. Lys8 bears the N6,N6-dimethyllysine mark. The interaction with ARIH2 stretch occupies residues 91–330 (GDSPLSDSPP…RHRESQHNLK (240 aa)). 6 consecutive C2H2-type zinc fingers follow at residues 163-186 (YHCV…RRSH), 192-214 (FACD…THVH), 220-242 (FECR…LLIH), 248-270 (YPCQ…TYIH), 276-298 (HKCQ…SRKH), and 304-327 (FSCE…ESQH). A mediates interaction with GATA1 region spans residues 164–330 (HCVKCNKVFS…RHRESQHNLK (167 aa)).

Component of a RCOR-GFI-KDM1A-HDAC complex. Interacts directly with RCOR1, KDM1A and HDAC2. Forms a complex with GATA1. Interacts with histone methyltransferases EHMT2 and SUV39H1. Interacts with ARIH2 (via RING-type 2). Interacts with RUNX1T1. In terms of processing, methylation at Lys-8 in the SNAG domain seems required for the recruitment of the corepressor complex. Expressed in bone marrow and fetal liver, but also detectable in fetal spleen, fetal thymus, and testes. Detected in hematopoietic stem cells, erythroblasts, and megakaryocytes. Overexpressed in bone marrow of patients with erythroleukemia and megakaryocytic leukemia as well as in their corresponding leukemic cell lines, and markedly repressed in severe aplastic anemia (SAA).

The protein resides in the nucleus. Its function is as follows. Essential proto-oncogenic transcriptional regulator necessary for development and differentiation of erythroid and megakaryocytic lineages. Component of a RCOR-GFI-KDM1A-HDAC complex that suppresses, via histone deacetylase (HDAC) recruitment, a number of genes implicated in multilineage blood cell development and controls hematopoietic differentiation. Transcriptional repressor or activator depending on both promoter and cell type context; represses promoter activity of SOCS1 and SOCS3 and thus, may regulate cytokine signaling pathways. Cooperates with GATA1 to repress target gene transcription, such as the apoptosis regulator BCL2L1; GFI1B silencing in leukemic cell lines markedly increase apoptosis rate. Inhibits down-regulation of MYC and MYB as well as the cyclin-dependent kinase inhibitor CDKN1A/P21WAF1 in IL6-treated myelomonocytic cells. Represses expression of GATA3 in T-cell lymphomas and inhibits GATA1-mediated transcription; as GATA1 also mediates erythroid GFI1B transcription, both GATA1 and GFI1B participate in a feedback regulatory pathway controlling the expression of GFI1B gene in erythroid cells. Suppresses GATA1-mediated stimulation of GFI1B promoter through protein interaction. Binds to gamma-satellite DNA and to its own promoter, auto-repressing its own expression. Alters histone methylation by recruiting histone methyltransferase to target genes promoters. Plays a role in heterochromatin formation. The chain is Zinc finger protein Gfi-1b (GFI1B) from Homo sapiens (Human).